Reading from the N-terminus, the 227-residue chain is ATP synthase F(0) complex subunit a (227 aa).

6 helical membrane-spanning segments follow: residues 14–34 (YLGI…FPLP), 69–89 (WALL…LGLL), 98–118 (QLSL…IIGL), 132–152 (EGTP…SLFI), 179–199 (VFVL…VLFL), and 202–222 (LLEV…LSLY).

This sequence belongs to the ATPase A chain family. Component of the ATP synthase complex composed at least of ATP5F1A/subunit alpha, ATP5F1B/subunit beta, ATP5MC1/subunit c (homooctomer), MT-ATP6/subunit a, MT-ATP8/subunit 8, ATP5ME/subunit e, ATP5MF/subunit f, ATP5MG/subunit g, ATP5MK/subunit k, ATP5MJ/subunit j, ATP5F1C/subunit gamma, ATP5F1D/subunit delta, ATP5F1E/subunit epsilon, ATP5PF/subunit F6, ATP5PB/subunit b, ATP5PD/subunit d, ATP5PO/subunit OSCP. ATP synthase complex consists of a soluble F(1) head domain (subunits alpha(3) and beta(3)) - the catalytic core - and a membrane F(0) domain - the membrane proton channel (subunits c, a, 8, e, f, g, k and j). These two domains are linked by a central stalk (subunits gamma, delta, and epsilon) rotating inside the F1 region and a stationary peripheral stalk (subunits F6, b, d, and OSCP). Interacts with DNAJC30; interaction is direct.

It localises to the mitochondrion inner membrane. The enzyme catalyses H(+)(in) = H(+)(out). Its function is as follows. Subunit a, of the mitochondrial membrane ATP synthase complex (F(1)F(0) ATP synthase or Complex V) that produces ATP from ADP in the presence of a proton gradient across the membrane which is generated by electron transport complexes of the respiratory chain. ATP synthase complex consist of a soluble F(1) head domain - the catalytic core - and a membrane F(1) domain - the membrane proton channel. These two domains are linked by a central stalk rotating inside the F(1) region and a stationary peripheral stalk. During catalysis, ATP synthesis in the catalytic domain of F(1) is coupled via a rotary mechanism of the central stalk subunits to proton translocation. With the subunit c (ATP5MC1), forms the proton-conducting channel in the F(0) domain, that contains two crucial half-channels (inlet and outlet) that facilitate proton movement from the mitochondrial intermembrane space (IMS) into the matrix. Protons are taken up via the inlet half-channel and released through the outlet half-channel, following a Grotthuss mechanism. The protein is ATP synthase F(0) complex subunit a of Formosania lacustris (Oriental stream loach).